The following is a 908-amino-acid chain: Protein translocase subunit SecA (908 aa).

Residues Q87, 105-109 (GEGKT), and D512 each bind ATP. Residues 865–908 (GGDDGSDEMMAHTPMIRDGDKVGRNDPCPCGSGRKYKQCHGKLS) form a disordered region. Residues 879–888 (MIRDGDKVGR) show a composition bias toward basic and acidic residues. Positions 892, 894, 903, and 904 each coordinate Zn(2+). Over residues 898 to 908 (RKYKQCHGKLS) the composition is skewed to basic residues.

Belongs to the SecA family. In terms of assembly, monomer and homodimer. Part of the essential Sec protein translocation apparatus which comprises SecA, SecYEG and auxiliary proteins SecDF-YajC and YidC. Zn(2+) is required as a cofactor.

It localises to the cell inner membrane. The protein localises to the cytoplasm. It carries out the reaction ATP + H2O + cellular proteinSide 1 = ADP + phosphate + cellular proteinSide 2.. Functionally, part of the Sec protein translocase complex. Interacts with the SecYEG preprotein conducting channel. Has a central role in coupling the hydrolysis of ATP to the transfer of proteins into and across the cell membrane, serving both as a receptor for the preprotein-SecB complex and as an ATP-driven molecular motor driving the stepwise translocation of polypeptide chains across the membrane. The protein is Protein translocase subunit SecA of Shewanella sp. (strain MR-4).